Consider the following 273-residue polypeptide: NAD-dependent protein deacylase (273 aa).

One can recognise a Deacetylase sirtuin-type domain in the interval 1 to 269; sequence MNLDNAIHEA…PRIVEQVKKI (269 aa). Residues 25-44 and 107-110 contribute to the NAD(+) site; these read GAGV…GGVW and QNID. The active-site Proton acceptor is the histidine 125. Cysteine 133, cysteine 136, cysteine 173, and cysteine 176 together coordinate Zn(2+). Residues 211 to 213, 237 to 239, and threonine 255 each bind NAD(+); these read GTS and NPN.

It belongs to the sirtuin family. Class III subfamily. The cofactor is Zn(2+).

It localises to the cytoplasm. The catalysed reaction is N(6)-acetyl-L-lysyl-[protein] + NAD(+) + H2O = 2''-O-acetyl-ADP-D-ribose + nicotinamide + L-lysyl-[protein]. NAD-dependent protein deacetylase which modulates the activities of several proteins which are inactive in their acetylated form. The chain is NAD-dependent protein deacylase (cobB) from Desulfosudis oleivorans (strain DSM 6200 / JCM 39069 / Hxd3) (Desulfococcus oleovorans).